A 505-amino-acid chain; its full sequence is Glutamate--tRNA ligase (505 aa).

A 'HIGH' region motif is present at residues 12–22 (PSPTGALHIGG). A 'KMSKS' region motif is present at residues 260 to 264 (KLSKR). Residue lysine 263 participates in ATP binding.

This sequence belongs to the class-I aminoacyl-tRNA synthetase family. Glutamate--tRNA ligase type 1 subfamily. As to quaternary structure, monomer.

It is found in the cytoplasm. The enzyme catalyses tRNA(Glu) + L-glutamate + ATP = L-glutamyl-tRNA(Glu) + AMP + diphosphate. Its function is as follows. Catalyzes the attachment of glutamate to tRNA(Glu) in a two-step reaction: glutamate is first activated by ATP to form Glu-AMP and then transferred to the acceptor end of tRNA(Glu). The polypeptide is Glutamate--tRNA ligase (Parabacteroides distasonis (strain ATCC 8503 / DSM 20701 / CIP 104284 / JCM 5825 / NCTC 11152)).